The chain runs to 123 residues: Fluoride-specific ion channel FluC (123 aa).

A run of 4 helical transmembrane segments spans residues 7 to 27, 39 to 59, 68 to 88, and 100 to 120; these read VAIA…SGIL, LVNS…FWGI, FFGT…YETF, and ALNI…GFIL. Residues G75 and S78 each contribute to the Na(+) site.

Belongs to the fluoride channel Fluc/FEX (TC 1.A.43) family.

The protein resides in the cell membrane. It carries out the reaction fluoride(in) = fluoride(out). Na(+) is not transported, but it plays an essential structural role and its presence is essential for fluoride channel function. Its function is as follows. Fluoride-specific ion channel. Important for reducing fluoride concentration in the cell, thus reducing its toxicity. This is Fluoride-specific ion channel FluC from Thermococcus onnurineus (strain NA1).